Here is a 132-residue protein sequence, read N- to C-terminus: Small ribosomal subunit protein uS8 (132 aa).

Belongs to the universal ribosomal protein uS8 family. As to quaternary structure, part of the 30S ribosomal subunit. Contacts proteins S5 and S12.

Functionally, one of the primary rRNA binding proteins, it binds directly to 16S rRNA central domain where it helps coordinate assembly of the platform of the 30S subunit. This Lactococcus lactis subsp. cremoris (strain MG1363) protein is Small ribosomal subunit protein uS8.